We begin with the raw amino-acid sequence, 606 residues long: Mitogen-activated protein kinase kinase kinase 7 (606 aa).

Residues 1-300 (MSTASAASSS…FPGADEPLQY (300 aa)) are interaction with MAPK8IP1. The region spanning 36–291 (IEVEEVVGRG…KIMTHLMRYF (256 aa)) is the Protein kinase domain. ATP is bound by residues 42-50 (VGRGAFGVV) and K63. Residue K72 forms a Glycyl lysine isopeptide (Lys-Gly) (interchain with G-Cter in ubiquitin) linkage. D156 functions as the Proton acceptor in the catalytic mechanism. A Glycyl lysine isopeptide (Lys-Gly) (interchain with G-Cter in ubiquitin) cross-link involves residue K158. Phosphothreonine; by autocatalysis is present on residues T184 and T187. S192 is subject to Phosphoserine; by autocatalysis. K209 participates in a covalent cross-link: Glycyl lysine isopeptide (Lys-Gly) (interchain with G-Cter in ubiquitin). 2 disordered regions span residues 301 to 338 (PCQY…MEQV) and 354 to 391 (KNQA…MSAD). Residues 306–338 (DEGQSNSATSTGSFMDIASTNTSNKSDTNMEQV) are compositionally biased toward polar residues. Residues 361–375 (SESGRLSLGASRGSS) show a composition bias toward low complexity. 3 positions are modified to phosphoserine: S367, S389, and S439. Positions 443–452 (LTVTGTEPGQ) are enriched in polar residues. The interval 443 to 493 (LTVTGTEPGQVSSRSSSPSVRMITTSGPTSEKPTRSHPWTPDDSTDTNGSD) is disordered. Low complexity predominate over residues 453–463 (VSSRSSSPSVR). A Phosphoserine modification is found at S455. Over residues 464–473 (MITTSGPTSE) the composition is skewed to polar residues.

It belongs to the protein kinase superfamily. STE Ser/Thr protein kinase family. MAP kinase kinase kinase subfamily. As to quaternary structure, can form homodimer. Binds both upstream activators and downstream substrates in multimolecular complexes. Interacts with TAB1/MAP3K7IP1, TAB2/MAP3K7IP2 and TAB3/MAP3K7IP3. Identified in the TRIKA2 complex composed of MAP3K7/TAK1, TAB1/MAP3K7IP1 and TAB2/MAP3K7IP2. Interacts with PPM1L and PPM1B/PP2CB. Interaction with PP2A and PPP6C leads to its repressed activity. Interacts with TRAF6 and TAB1/MAP3K7IP1; during IL-1 signaling. Interacts with TAOK1 and TAOK2; interaction with TAOK2 interferes with MAP3K7 interaction with IKKA, thus preventing NF-kappa-B activation. Interacts with DYNC2I2 (via WD domains). Interacts with CYLD and RBCK1. Interacts with TGFBR1; induces MAP3K7/TAK1 activation by TRAF6. Interacts with MAPK8IP1 and SMAD6. Interacts with isoform 1 of VRK2. Interacts with DAB2; the interaction is induced by TGF-beta stimulation and may mediate TGF-beta stimulated JNK activation. Interacts with TRIM5. Part of a complex containing ITCH, NDFIP1 and MAP3K7. Interacts with IFIT5; the interaction synergizes the recruitment of IKK to MAP3K7 and enhances IKK phosphorylation. Interacts with PLEKHM1 (via N- and C-terminus). Found in a complex with SH3RF1, RAC2, MAP2K7/MKK7, MAPK8IP1/JIP1, MAPK8/JNK1 and MAPK9/JNK2. Interacts with SASH1. Interacts with RIPK1. Mg(2+) serves as cofactor. Association with TAB1/MAP3K7IP1 promotes autophosphorylation at Ser-192 and subsequent activation. Association with TAB2/MAP3K7IP2, itself associated with free unanchored Lys-63 polyubiquitin chain, promotes autophosphorylation and subsequent activation of MAP3K7. Dephosphorylation at Ser-192 by PPM1B/PP2CB and at Thr-187 by PP2A and PPP6C leads to inactivation. In terms of processing, 'Lys-48'-linked polyubiquitination at Lys-72 is induced by TNFalpha, and leads to proteasomal degradation. Undergoes 'Lys-48'-linked polyubiquitination catalyzed by ITCH. 'Lys-63'-linked polyubiquitination at Lys-158 by TRIM8 does not lead to proteasomal degradation but contributes to autophosphorylation and activation. Deubiquitinated by CYLD, a protease that selectively cleaves 'Lys-63'-linked ubiquitin chains. Deubiquitinated by USP19; leading to negative regulation of TNF-alpha- and IL-1beta-triggered NF-kappa-B activation.

It localises to the cytoplasm. The protein resides in the cell membrane. It carries out the reaction L-seryl-[protein] + ATP = O-phospho-L-seryl-[protein] + ADP + H(+). The enzyme catalyses L-threonyl-[protein] + ATP = O-phospho-L-threonyl-[protein] + ADP + H(+). With respect to regulation, activated by pro-inflammatory cytokines and in response to physical and chemical stresses, including osmotic stress, oxidative stress, arsenic and ultraviolet light irradiation. Activated by 'Lys-63'-linked polyubiquitination and by autophosphorylation. Association with TAB1/MAP3K7IP1 and TAB2/MAP3K7IP2 promotes activation through autophosphorylation, whereas PPM1B/PP2CB, PP2A and PPP6C dephosphorylation leads to inactivation. Ceramides are also able to activate MAP3K7/TAK1. Serine/threonine kinase which acts as an essential component of the MAP kinase signal transduction pathway. Plays an important role in the cascades of cellular responses evoked by changes in the environment. Mediates signal transduction of TRAF6, various cytokines including interleukin-1 (IL-1), transforming growth factor-beta (TGFB), TGFB-related factors like BMP2 and BMP4, toll-like receptors (TLR), tumor necrosis factor receptor CD40 and B-cell receptor (BCR). Once activated, acts as an upstream activator of the MKK/JNK signal transduction cascade and the p38 MAPK signal transduction cascade through the phosphorylation and activation of several MAP kinase kinases like MAP2K1/MEK1, MAP2K3/MKK3, MAP2K6/MKK6 and MAP2K7/MKK7. These MAP2Ks in turn activate p38 MAPKs and c-jun N-terminal kinases (JNKs); both p38 MAPK and JNK pathways control the transcription factors activator protein-1 (AP-1). Independently of MAP2Ks and p38 MAPKs, acts as a key activator of NF-kappa-B by promoting activation of the I-kappa-B-kinase (IKK) core complex. Mechanistically, recruited to polyubiquitin chains of RIPK2 and IKBKG/NEMO via TAB2/MAP3K7IP2 and TAB3/MAP3K7IP3, and catalyzes phosphorylation and activation of IKBKB/IKKB component of the IKK complex, leading to NF-kappa-B activation. In osmotic stress signaling, plays a major role in the activation of MAPK8/JNK1, but not that of NF-kappa-B. Promotes TRIM5 capsid-specific restriction activity. Phosphorylates RIPK1 at 'Ser-321' which positively regulates RIPK1 interaction with RIPK3 to promote necroptosis but negatively regulates RIPK1 kinase activity and its interaction with FADD to mediate apoptosis. Phosphorylates STING1 in response to cGAMP-activation, promoting association between STEEP1 and STING1 and STING1 translocation to COPII vesicles. This is Mitogen-activated protein kinase kinase kinase 7 (MAP3K7) from Pongo abelii (Sumatran orangutan).